We begin with the raw amino-acid sequence, 973 residues long: Vacuolar protein sorting-associated protein 18 homolog (973 aa).

Ala-2 bears the N-acetylalanine mark. A phosphoserine mark is found at Ser-3, Ser-11, and Ser-13. Lys-362 bears the N6-acetyllysine mark. The stretch at 454-481 (EEIALKFLEARQEEALAEFLQRKLASLK) forms a coiled coil. The CHCR repeat unit spans residues 618–772 (GSRLDARQLI…VVQEEEDVQT (155 aa)). Ser-689 is modified (phosphoserine). Residues 802-848 (KEAICSSLKAYNHHIQELQREMEEATASAQRIRRDLQELRGRYGTVE) are a coiled coil. An RING-type zinc finger spans residues 853 to 947 (CATCDFPLLN…ELVAAECVYC (95 aa)). Residues 903–929 (GAAPPPAKGSARAKEAEGGAATAGPSR) are disordered. Phosphoserine is present on Ser-912.

This sequence belongs to the VPS18 family. In terms of assembly, core component of at least two putative endosomal tethering complexes, the homotypic fusion and vacuole protein sorting (HOPS) complex and the class C core vacuole/endosome tethering (CORVET) complex. Their common core is composed of the class C Vps proteins VPS11, VPS16, VPS18 and VPS33A, which in HOPS further associates with VPS39 and VPS41 and in CORVET with VPS8 and TGFBRAP1. Interacts with RAB5C. Interacts with HOOK1. Interacts with STX7, MON1B. Associates with adaptor protein complex 3 (AP-3) and clathrin:AP-3 complexes. Interacts with SYNPO2. Interacts with PLEKHM1. In terms of tissue distribution, ubiquitous. Expression was highest in heart and low in lung.

The protein localises to the late endosome membrane. It localises to the lysosome membrane. Its subcellular location is the early endosome. It is found in the cytoplasmic vesicle. The protein resides in the autophagosome. The protein localises to the clathrin-coated vesicle. Plays a role in vesicle-mediated protein trafficking to lysosomal compartments including the endocytic membrane transport and autophagic pathways. Believed to act as a core component of the putative HOPS and CORVET endosomal tethering complexes which are proposed to be involved in the Rab5-to-Rab7 endosome conversion probably implicating MON1A/B, and via binding SNAREs and SNARE complexes to mediate tethering and docking events during SNARE-mediated membrane fusion. The HOPS complex is proposed to be recruited to Rab7 on the late endosomal membrane and to regulate late endocytic, phagocytic and autophagic traffic towards lysosomes. The CORVET complex is proposed to function as a Rab5 effector to mediate early endosome fusion probably in specific endosome subpopulations. Required for fusion of endosomes and autophagosomes with lysosomes. Involved in dendrite development of Pukinje cells. This Homo sapiens (Human) protein is Vacuolar protein sorting-associated protein 18 homolog.